The sequence spans 694 residues: MEAWGQSPACSSSRKARTGPSLASVLNDLPSAATLRYRGPGVLPWGTLDEDDDEGGRSLQAFAETAQMESHPSRELPWPMQARRAHRKSQATGQLASGSESRAAYWTRQLSRTKGKMKEGFQTIQPWAWTLKKIGGQFGAGTESYFSLLRFLLFLNLVASVIEICMKLIPTWLEGAPPGPPGPNISSPCGSYIPHTHGLVAFPTQLFNLLSGEGYLEWSPLFYGFYPPRSNLAITYLCSVFAISVIYLLCILRRSVSGLKETLLAESDILTSYSHRVFSAWNFGLCGDVHVRLRQRIILYELQVDLEEAVVRRRAAEQTLSQRAKVWSMRALLNVLVLALLGAAFYGIYWATEYTLTLQETPLVRQTPLFKLLVDYLPSIFISLFNFVLPPVFKFIASLEGYTQSRQIVLILLRTVFLRLASLVFLLVSLWSQITCGGNMEAEGCKACGYNYKEIPCWETRLGQEMYKLVLFDLLMGLLVTLLVQFPRKILCGLCPGALGRLSGTLEFQVPDEVLGLIYAQTVVWVGSFFCPLLPLINTAKFLILFCLKKITLFSIYSPASRTFRASTANFFFPLVLLVGLAISAVPVLYSIFLIPPSKLCGPFRGKLSIWAQIPEAIESLPQTAQNFLYFLGTQAFTVPLLILSSILMMYTVALANCYGRLISELKRQIETEVQNKVFLAQRAVALSSRNGTS.

The tract at residues 1-21 (MEAWGQSPACSSSRKARTGPS) is disordered. Topologically, residues 1 to 150 (MEAWGQSPAC…GTESYFSLLR (150 aa)) are extracellular. Residues 151–171 (FLLFLNLVASVIEICMKLIPT) form a helical membrane-spanning segment. The Cytoplasmic portion of the chain corresponds to 172 to 231 (WLEGAPPGPPGPNISSPCGSYIPHTHGLVAFPTQLFNLLSGEGYLEWSPLFYGFYPPRSN). A helical membrane pass occupies residues 232-252 (LAITYLCSVFAISVIYLLCIL). The Extracellular portion of the chain corresponds to 253–330 (RRSVSGLKET…SQRAKVWSMR (78 aa)). Residues 331–351 (ALLNVLVLALLGAAFYGIYWA) traverse the membrane as a helical segment. Residues 352–376 (TEYTLTLQETPLVRQTPLFKLLVDY) are Cytoplasmic-facing. A helical membrane pass occupies residues 377 to 397 (LPSIFISLFNFVLPPVFKFIA). Over 398 to 407 (SLEGYTQSRQ) the chain is Extracellular. Residues 408–428 (IVLILLRTVFLRLASLVFLLV) form a helical membrane-spanning segment. Residues 429–465 (SLWSQITCGGNMEAEGCKACGYNYKEIPCWETRLGQE) are Cytoplasmic-facing. The helical transmembrane segment at 466 to 486 (MYKLVLFDLLMGLLVTLLVQF) threads the bilayer. Topologically, residues 487 to 513 (PRKILCGLCPGALGRLSGTLEFQVPDE) are extracellular. Residues 514–534 (VLGLIYAQTVVWVGSFFCPLL) traverse the membrane as a helical segment. Residue proline 535 is a topological domain, cytoplasmic. The helical transmembrane segment at 536 to 556 (LINTAKFLILFCLKKITLFSI) threads the bilayer. The Extracellular segment spans residues 557–574 (YSPASRTFRASTANFFFP). The chain crosses the membrane as a helical span at residues 575–595 (LVLLVGLAISAVPVLYSIFLI). The Cytoplasmic portion of the chain corresponds to 596-635 (PPSKLCGPFRGKLSIWAQIPEAIESLPQTAQNFLYFLGTQ). The chain crosses the membrane as a helical span at residues 636 to 656 (AFTVPLLILSSILMMYTVALA). Residues 657 to 694 (NCYGRLISELKRQIETEVQNKVFLAQRAVALSSRNGTS) are Extracellular-facing. Residue asparagine 691 is glycosylated (N-linked (GlcNAc...) asparagine).

Belongs to the TMC family. In terms of tissue distribution, expressed in taste bud cells of the posterior tongue. Ubiquitously expressed.

The protein localises to the membrane. The catalysed reaction is chloride(in) = chloride(out). Voltage-gated chloride channel involved in high-concentration salt taste sensation. Depolarization induced by high NaCl concentration may trigger the activation of TMC4-mediated chloride influx into taste bud cells, helping the return to resting potential. Also allows permeation of organic anions including gluconate, but their current amplitudes at positive potentials are less than that of chloride. Involved in pH and temperature-dependent modulation of salty taste. This Mus musculus (Mouse) protein is Voltage-gated chloride channel TMC4.